The primary structure comprises 228 residues: DNA mismatch repair protein MutH (228 aa).

The protein belongs to the MutH family.

It localises to the cytoplasm. Its function is as follows. Sequence-specific endonuclease that cleaves unmethylated GATC sequences. It is involved in DNA mismatch repair. In Yersinia enterocolitica serotype O:8 / biotype 1B (strain NCTC 13174 / 8081), this protein is DNA mismatch repair protein MutH.